Here is an 832-residue protein sequence, read N- to C-terminus: Protein P (832 aa).

The terminal protein domain (TP) stretch occupies residues M1–Q177. The tract at residues E178–L335 is spacer. A polymerase/reverse transcriptase domain (RT) region spans residues D336–Q679. The region spanning E346–I589 is the Reverse transcriptase domain. Residues D418, D540, and D541 each contribute to the Mg(2+) site.

Belongs to the hepadnaviridae P protein family.

The enzyme catalyses DNA(n) + a 2'-deoxyribonucleoside 5'-triphosphate = DNA(n+1) + diphosphate. The catalysed reaction is Endonucleolytic cleavage to 5'-phosphomonoester.. Activated by host HSP70 and HSP40 in vitro to be able to bind the epsilon loop of the pgRNA. Because deletion of the RNase H region renders the protein partly chaperone-independent, the chaperones may be needed indirectly to relieve occlusion of the RNA-binding site by this domain. Inhibited by several reverse-transcriptase inhibitors: Lamivudine, Adefovir and Entecavir. Functionally, multifunctional enzyme that converts the viral RNA genome into dsDNA in viral cytoplasmic capsids. This enzyme displays a DNA polymerase activity that can copy either DNA or RNA templates, and a ribonuclease H (RNase H) activity that cleaves the RNA strand of RNA-DNA heteroduplexes in a partially processive 3'- to 5'-endonucleasic mode. Neo-synthesized pregenomic RNA (pgRNA) are encapsidated together with the P protein, and reverse-transcribed inside the nucleocapsid. Initiation of reverse-transcription occurs first by binding the epsilon loop on the pgRNA genome, and is initiated by protein priming, thereby the 5'-end of (-)DNA is covalently linked to P protein. Partial (+)DNA is synthesized from the (-)DNA template and generates the relaxed circular DNA (RC-DNA) genome. After budding and infection, the RC-DNA migrates in the nucleus, and is converted into a plasmid-like covalently closed circular DNA (cccDNA). The activity of P protein does not seem to be necessary for cccDNA generation, and is presumably released from (+)DNA by host nuclear DNA repair machinery. This is Protein P from Pan troglodytes (Chimpanzee).